Consider the following 155-residue polypeptide: Ribosome maturation factor RimP (155 aa).

The protein belongs to the RimP family.

Its subcellular location is the cytoplasm. Functionally, required for maturation of 30S ribosomal subunits. This is Ribosome maturation factor RimP from Listeria monocytogenes serovar 1/2a (strain ATCC BAA-679 / EGD-e).